The following is a 1623-amino-acid chain: RING finger protein 17 (1623 aa).

Residues 1-22 (MAAEASKTGPSRSSYQRMGRKS) are disordered. Residues 32 to 75 (CTRCGRRVSRSSGHHCELQCGHAFCELCLLMTEECTTIICPDCE) form an RING-type zinc finger. K234 carries the post-translational modification N6-acetyllysine. Tudor domains lie at 726–784 (CPVQ…FLNA), 962–1021 (KWEN…LKTM), and 1228–1285 (FWKK…PDIP). The disordered stretch occupies residues 1438-1462 (NQSNQHSDTDDSGVSGESESESLDE). One can recognise a Tudor 4 domain in the interval 1479–1539 (DFRTEMPCLA…CQIPSHLMRY (61 aa)).

As to quaternary structure, interacts with MXD1, MXD3, MXD4, MXI1 and PIWIL1. Self-associates. In terms of tissue distribution, testis specific.

It localises to the cytoplasm. The protein resides in the nucleus. Functionally, seems to be involved in regulation of transcriptional activity of MYC. In vitro, inhibits DNA-binding activity of Mad-MAX heterodimers. Can recruit Mad transcriptional repressors (MXD1, MXD3, MXD4 and MXI1) to the cytoplasm. May be involved in spermiogenesis. The polypeptide is RING finger protein 17 (RNF17) (Homo sapiens (Human)).